A 308-amino-acid chain; its full sequence is N-acetylmuramic acid 6-phosphate etherase (308 aa).

The SIS domain maps to 62-225 (ITDAFKVGGR…TTASMIRLGK (164 aa)). E90 functions as the Proton donor in the catalytic mechanism. The active site involves E121.

It belongs to the GCKR-like family. MurNAc-6-P etherase subfamily. As to quaternary structure, homodimer.

The enzyme catalyses N-acetyl-D-muramate 6-phosphate + H2O = N-acetyl-D-glucosamine 6-phosphate + (R)-lactate. Its pathway is amino-sugar metabolism; 1,6-anhydro-N-acetylmuramate degradation. The protein operates within amino-sugar metabolism; N-acetylmuramate degradation. It participates in cell wall biogenesis; peptidoglycan recycling. Specifically catalyzes the cleavage of the D-lactyl ether substituent of MurNAc 6-phosphate, producing GlcNAc 6-phosphate and D-lactate. Together with AnmK, is also required for the utilization of anhydro-N-acetylmuramic acid (anhMurNAc) either imported from the medium or derived from its own cell wall murein, and thus plays a role in cell wall recycling. This is N-acetylmuramic acid 6-phosphate etherase from Vibrio campbellii (strain ATCC BAA-1116).